We begin with the raw amino-acid sequence, 446 residues long: Ubiquitin carboxyl-terminal hydrolase MINDY-3 (446 aa).

Catalysis depends on C51, which acts as the Nucleophile. A compositionally biased stretch (basic and acidic residues) spans 117–128; the sequence is DNSDITDSHPEP. The interval 117 to 137 is disordered; that stretch reads DNSDITDSHPEPESSQPTDTP. H288 acts as the Proton acceptor in catalysis.

The protein belongs to the MINDY deubiquitinase family. FAM188 subfamily.

It localises to the nucleus. The enzyme catalyses Thiol-dependent hydrolysis of ester, thioester, amide, peptide and isopeptide bonds formed by the C-terminal Gly of ubiquitin (a 76-residue protein attached to proteins as an intracellular targeting signal).. Its function is as follows. Hydrolase that can remove 'Lys-48'-linked conjugated ubiquitin from proteins. This Danio rerio (Zebrafish) protein is Ubiquitin carboxyl-terminal hydrolase MINDY-3 (mindy3).